A 216-amino-acid polypeptide reads, in one-letter code: Protein-L-isoaspartate O-methyltransferase (216 aa).

Ser-65 is an active-site residue.

It belongs to the methyltransferase superfamily. L-isoaspartyl/D-aspartyl protein methyltransferase family.

It localises to the cytoplasm. It catalyses the reaction [protein]-L-isoaspartate + S-adenosyl-L-methionine = [protein]-L-isoaspartate alpha-methyl ester + S-adenosyl-L-homocysteine. Functionally, catalyzes the methyl esterification of L-isoaspartyl residues in peptides and proteins that result from spontaneous decomposition of normal L-aspartyl and L-asparaginyl residues. It plays a role in the repair and/or degradation of damaged proteins. In Chlorobium phaeobacteroides (strain DSM 266 / SMG 266 / 2430), this protein is Protein-L-isoaspartate O-methyltransferase.